The chain runs to 195 residues: Shikimate kinase (195 aa).

Position 21–26 (21–26 (GTGKTS)) interacts with ATP. Threonine 25 contacts Mg(2+). Aspartate 43, arginine 67, and glycine 89 together coordinate substrate. A disordered region spans residues 128 to 148 (REQRPSFSGKASTEISEETMR). Residue arginine 131 coordinates ATP. Over residues 132–141 (PSFSGKASTE) the composition is skewed to polar residues. Substrate is bound at residue arginine 158.

Belongs to the shikimate kinase family. In terms of assembly, monomer. Mg(2+) serves as cofactor.

It localises to the cytoplasm. The enzyme catalyses shikimate + ATP = 3-phosphoshikimate + ADP + H(+). It participates in metabolic intermediate biosynthesis; chorismate biosynthesis; chorismate from D-erythrose 4-phosphate and phosphoenolpyruvate: step 5/7. Catalyzes the specific phosphorylation of the 3-hydroxyl group of shikimic acid using ATP as a cosubstrate. The chain is Shikimate kinase from Syntrophus aciditrophicus (strain SB).